We begin with the raw amino-acid sequence, 409 residues long: Accessory Sec system protein translocase subunit SecY2 (409 aa).

A run of 10 helical transmembrane segments spans residues 16–36, 61–81, 104–124, 132–152, 161–181, 190–210, 242–262, 286–306, 341–361, and 374–394; these read ILIT…PIPG, LSQV…MILL, VVML…FQYH, LLLA…IGNL, MTIL…PLIF, LAII…ITFE, GMAF…IILL, GVVI…FVNI, LFGT…LLFA, and TGIF…FQVI.

The protein belongs to the SecY/SEC61-alpha family. SecY2 subfamily. Component of the accessory SecA2/SecY2 protein translocase complex required to export cell wall proteins. May form heterotrimers with SecE and SecG subunits.

The protein resides in the cell membrane. Its function is as follows. Part of the accessory SecA2/SecY2 system specifically required for export of possible cell wall proteins. The central subunit of a protein translocation channel. This is Accessory Sec system protein translocase subunit SecY2 from Streptococcus agalactiae serotype III (strain NEM316).